We begin with the raw amino-acid sequence, 379 residues long: Sperm microtubule associated protein 2 (379 aa).

The segment at M1 to E82 is disordered. Composition is skewed to basic and acidic residues over residues G19–P29 and E38–L50. Positions G56 to E76 are enriched in acidic residues. 6 THEG repeats span residues K118–N137, T184–F203, S222–R241, A258–P277, P290–Q309, and V326–R345. S295 bears the Phosphoserine mark. Positions V344–L379 are disordered. Basic and acidic residues-rich tracts occupy residues G347–P356 and S368–L379.

Interacts with CCT5. In terms of tissue distribution, testis specific.

The protein resides in the nucleus. Its function is as follows. May be involved (but not essential) in spermatogenesis. This is Sperm microtubule associated protein 2 from Homo sapiens (Human).